The primary structure comprises 60 residues: UPF0434 protein KPN78578_09190 (60 aa).

Belongs to the UPF0434 family.

The chain is UPF0434 protein KPN78578_09190 from Klebsiella pneumoniae subsp. pneumoniae (strain ATCC 700721 / MGH 78578).